The sequence spans 105 residues: Large ribosomal subunit protein bL21 (105 aa).

Belongs to the bacterial ribosomal protein bL21 family. Part of the 50S ribosomal subunit. Contacts protein L20.

This protein binds to 23S rRNA in the presence of protein L20. This Thermotoga maritima (strain ATCC 43589 / DSM 3109 / JCM 10099 / NBRC 100826 / MSB8) protein is Large ribosomal subunit protein bL21.